A 277-amino-acid chain; its full sequence is 4-hydroxy-3-prenylphenylpyruvate oxygenase/4-hydroxy-3-prenylbenzoate synthase (277 aa).

The protein belongs to the aldolase class II family. In terms of assembly, homotetramer. Requires Fe(2+) as cofactor.

The catalysed reaction is 3-dimethylallyl-4-hydroxyphenylpyruvate + O2 = 3-dimethylallyl-4-hydroxymandelate + CO2. It catalyses the reaction 3-dimethylallyl-4-hydroxymandelate + O2 = 3-dimethylallyl-4-hydroxybenzoate + CO2 + H2O. It functions in the pathway antibiotic biosynthesis. Its activity is regulated as follows. Activated by ascorbate. Its function is as follows. Involved in the biosynthesis of ring A of the aminocoumarin antibiotic clorobiocin. Catalyzes two consecutive oxidative decarboxylations of 3-dimethylallyl-4-hydroxyphenylpyruvate (3DMA-4HPP) to yield 3-dimethylallyl-4-hydroxybenzoate (3DMA-4HB) via the 3-dimethylallyl-4-hydroxymandelic acid (3DMA-4HMA) intermediate. The polypeptide is 4-hydroxy-3-prenylphenylpyruvate oxygenase/4-hydroxy-3-prenylbenzoate synthase (Streptomyces roseochromogenus subsp. oscitans).